A 634-amino-acid polypeptide reads, in one-letter code: Factor of DNA methylation 1 (634 aa).

Positions 288 to 469 form a coiled coil; that stretch reads LDEKKNLHQA…LESMNSVLMT (182 aa). Positions 349 to 364 are enriched in basic and acidic residues; sequence ELDRQKLDEDKRKSDA. Positions 349–375 are disordered; sequence ELDRQKLDEDKRKSDAMNKSLQLASRE.

As to quaternary structure, homodimer. Interacts with IDN2 and AGO4. Forms a complex with IDN2 and FMD2/INDL2. Highly expressed in flowers and at lower levels in roots, leaves and stems.

In terms of biological role, forms a complex with IDN2 and FDM2/IDNL2 that is required for RNA-directed DNA methylation (RdDM) and that functions at a downstream step of the RdDM pathway. Required for de novo DNA methylation and 24 nucleotide small interfering RNA (siRNA) accumulation. Binds unmethylated but not methylated DNAs through its coiled-coil domain. May bind double-stranded RNAs (dsRNAs) with 5'-overhangs through its XS domain. However, according to, FMD1 does not bind dsRNAs. The sequence is that of Factor of DNA methylation 1 from Arabidopsis thaliana (Mouse-ear cress).